The primary structure comprises 360 residues: Glutamine synthetase (360 aa).

Residues 26–105 enclose the GS beta-grasp domain; the sequence is IMAEYIWIDA…VLSECWNADG (80 aa). One can recognise a GS catalytic domain in the interval 112 to 360; it reads YRHECAKLME…METIYGSVDN (249 aa).

The protein belongs to the glutamine synthetase family. Homooctamer.

The protein localises to the cytoplasm. It carries out the reaction L-glutamate + NH4(+) + ATP = L-glutamine + ADP + phosphate + H(+). In Colletotrichum gloeosporioides (Anthracnose fungus), this protein is Glutamine synthetase (GLN1).